The chain runs to 1913 residues: GREB1-like protein (1913 aa).

The segment covering 86–96 (MEDDEDEEEMS) has biased composition (acidic residues). Disordered stretches follow at residues 86–111 (MEDD…KPAP), 281–309 (NGTS…SPRP), 1097–1157 (EAER…TSSI), and 1179–1207 (DSLD…LAWS). Positions 289–301 (KSSSCSSTPSRPG) are enriched in low complexity. The span at 1118 to 1157 (PQSNSSAVTGTSGSIMENGVSSSSTAGKPQQQLLTPTSSI) shows a compositional bias: polar residues. Over residues 1187 to 1200 (SSTTSKPSSSSSSS) the composition is skewed to low complexity. Residues 1832-1852 (GVFFSGLLLYLCDSFVGADLL) form a helical membrane-spanning segment.

It belongs to the GREB1 family. Expressed in the inner ear, with a high presence in the spiral ganglia, cochlear nerve bundles, and hair cells.

The protein localises to the membrane. Functionally, plays a major role in early metanephros and genital development. This Mus musculus (Mouse) protein is GREB1-like protein (Greb1l).